Reading from the N-terminus, the 392-residue chain is S-adenosylmethionine synthase (392 aa).

Residue histidine 22 coordinates ATP. Position 24 (aspartate 24) interacts with Mg(2+). K(+) is bound at residue glutamate 50. Residues glutamate 63 and glutamine 106 each contribute to the L-methionine site. Residues 106-116 are flexible loop; sequence QSPDITQGVTL. ATP-binding positions include 170 to 172, 236 to 237, aspartate 245, 251 to 252, alanine 268, and lysine 272; these read DGK, KF, and RK. L-methionine is bound at residue aspartate 245. Lysine 276 is a binding site for L-methionine.

The protein belongs to the AdoMet synthase family. As to quaternary structure, homotetramer; dimer of dimers. Mg(2+) serves as cofactor. The cofactor is K(+).

It localises to the cytoplasm. It catalyses the reaction L-methionine + ATP + H2O = S-adenosyl-L-methionine + phosphate + diphosphate. It functions in the pathway amino-acid biosynthesis; S-adenosyl-L-methionine biosynthesis; S-adenosyl-L-methionine from L-methionine: step 1/1. Catalyzes the formation of S-adenosylmethionine (AdoMet) from methionine and ATP. The overall synthetic reaction is composed of two sequential steps, AdoMet formation and the subsequent tripolyphosphate hydrolysis which occurs prior to release of AdoMet from the enzyme. This Sulfurimonas denitrificans (strain ATCC 33889 / DSM 1251) (Thiomicrospira denitrificans (strain ATCC 33889 / DSM 1251)) protein is S-adenosylmethionine synthase.